A 310-amino-acid chain; its full sequence is Proline iminopeptidase (310 aa).

The AB hydrolase-1 domain maps to 33 to 290 (PVIFLHGGPG…RVVQAGHRAF (258 aa)). The Nucleophile role is filled by S107. D260 is a catalytic residue. H287 acts as the Proton donor in catalysis.

The protein belongs to the peptidase S33 family.

The protein resides in the cytoplasm. The enzyme catalyses Release of N-terminal proline from a peptide.. Functionally, specifically catalyzes the removal of N-terminal proline residues from peptides. In Neisseria meningitidis serogroup A / serotype 4A (strain DSM 15465 / Z2491), this protein is Proline iminopeptidase (pip).